The following is an 82-amino-acid chain: Translation initiation factor IF-1, chloroplastic (82 aa).

Residues 1 to 72 (MNKQNLIDVE…TKGRIIYRLR (72 aa)) enclose the S1-like domain.

It belongs to the IF-1 family. In terms of assembly, component of the 30S ribosomal translation pre-initiation complex which assembles on the 30S ribosome in the order IF-2 and IF-3, IF-1 and N-formylmethionyl-tRNA(fMet); mRNA recruitment can occur at any time during PIC assembly.

The protein resides in the plastid. It localises to the chloroplast. In terms of biological role, one of the essential components for the initiation of protein synthesis. Stabilizes the binding of IF-2 and IF-3 on the 30S subunit to which N-formylmethionyl-tRNA(fMet) subsequently binds. Helps modulate mRNA selection, yielding the 30S pre-initiation complex (PIC). Upon addition of the 50S ribosomal subunit IF-1, IF-2 and IF-3 are released leaving the mature 70S translation initiation complex. The polypeptide is Translation initiation factor IF-1, chloroplastic (Cycas taitungensis (Prince sago)).